The following is a 907-amino-acid chain: Whirlin (907 aa).

Residues 140-223 (LVSLRRAKAH…LVLSVYSAGR (84 aa)) enclose the PDZ 1 domain. Positions 243 to 264 (SISPPSGLPQPHGGALRQQEGD) are disordered. The PDZ 2 domain occupies 279 to 361 (KVNLVLGDGR…LILTVKDVGR (83 aa)). Disordered stretches follow at residues 502 to 540 (SMKA…TVSS), 565 to 663 (SVDD…SSKR), 684 to 717 (QSPP…QTGT), and 742 to 815 (PQTR…PTST). Over residues 521–540 (SYSDTGSSTGSHGTSTTVSS) the composition is skewed to low complexity. The span at 609–626 (PPSSMPSCSGTVFSAPQN) shows a compositional bias: polar residues. The segment covering 628–642 (SPPAGTAPTPGTSSA) has biased composition (low complexity). Serine 685 is subject to Phosphoserine. Residues 743–762 (QTRTASTLSQLSDSGQTLSE) show a composition bias toward polar residues. Over residues 789–800 (SSKELPRNERPT) the composition is skewed to basic and acidic residues. The PDZ 3 domain occupies 816–899 (LVRVKKSAAT…TKDRDYIDFL (84 aa)).

As to quaternary structure, forms homooligomers. Interacts (via C-terminal PDZ domain) with MYO15A; this interaction is necessary for localization of WHRN to stereocilia tips. Interacts (via C-terminal PDZ domain) with MPP1/p55. Interacts with LRRC4C/NGL1. Interacts with MYO7A. Interacts with RPGR. Interacts with EPS8. Interacts with CASK. Interacts with CIB2. Component of USH2 complex, composed of ADGRV1, PDZD7, USH2A and WHRN. Interacts (via PDZ domains) with PDZD7; the interaction is direct. Interacts (via N-terminal PDZ domain) with USH2A (via cytoplasmic region). Interacts with ADGRV1/MASS1 (via cytoplasmic region).

It localises to the cytoplasm. The protein resides in the cell projection. Its subcellular location is the stereocilium. It is found in the growth cone. The protein localises to the photoreceptor inner segment. It localises to the synapse. Functionally, involved in hearing and vision as member of the USH2 complex. Necessary for elongation and maintenance of inner and outer hair cell stereocilia in the organ of Corti in the inner ear. Involved in the maintenance of the hair bundle ankle region, which connects stereocilia in cochlear hair cells of the inner ear. In retina photoreceptors, required for the maintenance of periciliary membrane complex that seems to play a role in regulating intracellular protein transport. The protein is Whirlin of Homo sapiens (Human).